Reading from the N-terminus, the 48-residue chain is Sperm protamine P1 (48 aa).

Belongs to the protamine P1 family. In terms of tissue distribution, testis.

It localises to the nucleus. The protein localises to the chromosome. Functionally, protamines substitute for histones in the chromatin of sperm during the haploid phase of spermatogenesis. They compact sperm DNA into a highly condensed, stable and inactive complex. This chain is Sperm protamine P1 (PRM1), found in Corynorhinus townsendii (Townsend's big-eared bat).